Here is an 841-residue protein sequence, read N- to C-terminus: Probable inorganic carbon transporter subunit DabA 1 (841 aa).

Zn(2+)-binding residues include Cys-352, Asp-354, His-536, and Cys-551.

The protein belongs to the inorganic carbon transporter (TC 9.A.2) DabA family. As to quaternary structure, forms a complex with DabB. Zn(2+) is required as a cofactor.

The protein resides in the cell inner membrane. Its function is as follows. Part of an energy-coupled inorganic carbon pump. The polypeptide is Probable inorganic carbon transporter subunit DabA 1 (Bradyrhizobium sp. (strain ORS 278)).